The sequence spans 129 residues: Small ribosomal subunit protein uS9 (129 aa).

Belongs to the universal ribosomal protein uS9 family.

The protein is Small ribosomal subunit protein uS9 of Pelodictyon phaeoclathratiforme (strain DSM 5477 / BU-1).